We begin with the raw amino-acid sequence, 365 residues long: Putative outer membrane porin protein NmpC (365 aa).

The signal sequence occupies residues 1–23 (MKKLTVAISAVAASVLMAMSAQA).

It belongs to the Gram-negative porin family. In terms of assembly, homotrimer.

Its subcellular location is the cell outer membrane. The polypeptide is Putative outer membrane porin protein NmpC (nmpC) (Escherichia coli (strain K12)).